Reading from the N-terminus, the 60-residue chain is MDHRLLEIIACPVCNGKLWYNQEKQEIICKLDNLAFPLRDGIPVLLETEARVLTADESKS.

It belongs to the UPF0434 family.

The protein is UPF0434 protein YcaR of Escherichia coli O81 (strain ED1a).